The chain runs to 209 residues: Ribosomal RNA large subunit methyltransferase E (209 aa).

Positions 63, 65, 83, 99, and 124 each coordinate S-adenosyl-L-methionine. Residue Lys164 is the Proton acceptor of the active site.

This sequence belongs to the class I-like SAM-binding methyltransferase superfamily. RNA methyltransferase RlmE family.

The protein resides in the cytoplasm. It carries out the reaction uridine(2552) in 23S rRNA + S-adenosyl-L-methionine = 2'-O-methyluridine(2552) in 23S rRNA + S-adenosyl-L-homocysteine + H(+). Its function is as follows. Specifically methylates the uridine in position 2552 of 23S rRNA at the 2'-O position of the ribose in the fully assembled 50S ribosomal subunit. This is Ribosomal RNA large subunit methyltransferase E from Colwellia psychrerythraea (strain 34H / ATCC BAA-681) (Vibrio psychroerythus).